The sequence spans 814 residues: Transcription factor oryO (814 aa).

Disordered regions lie at residues 1 to 59 (MTAR…PACN) and 699 to 723 (PMDG…SIPP). Polar residues-rich tracts occupy residues 16–27 (ANPTVRDQTQQD) and 49–59 (QPDNTSSPACN). The segment at residues 58–85 (CNQCRTRKIRCDRQQPKCSNCRRADVEC) is a DNA-binding region (zn(2)-C6 fungal-type). The segment covering 713-723 (PSESELSSIPP) has biased composition (low complexity).

The protein resides in the nucleus. In terms of biological role, transcription factor that regulates the expression of the gene cluster that mediates the biosynthesis of oryzines, natural products with an unusual maleidride backbone. The chain is Transcription factor oryO from Aspergillus oryzae (strain ATCC 42149 / RIB 40) (Yellow koji mold).